We begin with the raw amino-acid sequence, 318 residues long: MSAPEVENKPADAPEHCPGTESENAGKASACAGCPNQQICATGPKGPDPSIALVKEKLKEVRNKILVLSGKGGVGKSTVTALLSRAMAQLNPERNYGVLDVDICGPSQPRVLGVLGEQVHQSGSGWSPVYVEDNLSLMSIGFLLGSPDDAIIWRGPKKNGMIRQFLTEVDWGQLDYLVLDTPPGTSDEHLSATTFLKETDGNWGAVLVTTPQEVALLDVRKEITFCKKMGIPVVGVVENMSVFVCPKCTTESDIFPAKTGGAEKMCEEMEVAYLGKLPLDPRLAKCCDEGKDFITEHSKSPTVIALHQIVAKVQDFFD.

Positions 1–15 are enriched in basic and acidic residues; the sequence is MSAPEVENKPADAPE. Residues 1-29 are disordered; sequence MSAPEVENKPADAPEHCPGTESENAGKAS. [4Fe-4S] cluster contacts are provided by Cys-17, Cys-31, Cys-34, and Cys-40. Position 70–77 (70–77) interacts with ATP; it reads GKGGVGKS. [4Fe-4S] cluster is bound by residues Cys-245 and Cys-248.

This sequence belongs to the Mrp/NBP35 ATP-binding proteins family. NUBP1/NBP35 subfamily. In terms of assembly, heterotetramer of 2 Nubp1 and 2 Nubp2 chains. It depends on [4Fe-4S] cluster as a cofactor.

It localises to the cytoplasm. Functionally, component of the cytosolic iron-sulfur (Fe/S) protein assembly (CIA) machinery. Required for maturation of extramitochondrial Fe-S proteins. The Nubp1-Nubp2 heterotetramer forms a Fe-S scaffold complex, mediating the de novo assembly of an Fe-S cluster and its transfer to target apoproteins. The chain is Cytosolic Fe-S cluster assembly factor Nubp1 homolog from Aedes aegypti (Yellowfever mosquito).